Here is a 351-residue protein sequence, read N- to C-terminus: 1-acylglycerol-3-phosphate O-acyltransferase ABHD5 (351 aa).

Positions 79–184 constitute an AB hydrolase-1 domain; that stretch reads PLVLLHGFGG…LILVEPWGFP (106 aa). Ser-124 carries the post-translational modification Phosphoserine. Positions 329-334 match the HXXXXD motif motif; sequence HYVYAD.

The protein belongs to the peptidase S33 family. ABHD4/ABHD5 subfamily. As to quaternary structure, interacts with ADRP. Interacts with PLIN. Interacts with and PNPLA2. Interacts with PLIN5; promotes interaction with PNPLA2. Highly expressed in the adipose tissue and testes. Weakly expressed in the liver, muscle, kidney, and heart. Expressed by upper epidermal layers and dermal fibroblasts in skin, hepatocytes and hypothalamus in brain (at protein level).

The protein resides in the cytoplasm. It localises to the lipid droplet. Its subcellular location is the cytosol. The catalysed reaction is a 1-acyl-sn-glycero-3-phosphate + an acyl-CoA = a 1,2-diacyl-sn-glycero-3-phosphate + CoA. It catalyses the reaction 1-(9Z-octadecenoyl)-sn-glycero-3-phosphate + (9Z)-octadecenoyl-CoA = 1,2-di-(9Z-octadecenoyl)-sn-glycero-3-phosphate + CoA. The enzyme catalyses 1-(9Z-octadecenoyl)-sn-glycero-3-phosphate + hexadecanoyl-CoA = 1-(9Z)-octadecenoyl-2-hexadecanoyl-sn-glycero-3-phosphate + CoA. It carries out the reaction 1-(9Z-octadecenoyl)-sn-glycero-3-phosphate + octadecanoyl-CoA = 1-(9Z-octadecenoyl)-2-octadecanoyl-sn-glycero-3-phosphate + CoA. The catalysed reaction is 1-(9Z-octadecenoyl)-sn-glycero-3-phosphate + (5Z,8Z,11Z,14Z)-eicosatetraenoyl-CoA = 1-(9Z)-octadecenoyl-2-(5Z,8Z,11Z,14Z)-eicosatetraenoyl-sn-glycero-3-phosphate + CoA. It catalyses the reaction eicosanoyl-CoA + 1-(9Z-octadecenoyl)-sn-glycero-3-phosphate = 1-(9Z)-octadecenoyl-2-eicosanoyl-sn-glycero-3-phosphate + CoA. The enzyme catalyses 1-hexadecanoyl-sn-glycero-3-phosphate + (9Z)-octadecenoyl-CoA = 1-hexadecanoyl-2-(9Z-octadecenoyl)-sn-glycero-3-phosphate + CoA. It carries out the reaction 1-octadecanoyl-sn-glycero-3-phosphate + (9Z)-octadecenoyl-CoA = 1-octadecanoyl-2-(9Z-octadecenoyl)-sn-glycero-3-phosphate + CoA. The catalysed reaction is 1-(5Z,8Z,11Z,14Z-eicosatetraenoyl)-sn-glycero-3-phosphate + (9Z)-octadecenoyl-CoA = 1-(5Z,8Z,11Z,14Z)-eicosatetraenoyl-2-(9Z)-octadecenoyl-sn-glycero-3-phosphate + CoA. Acyltransferase activity is inhibited by detergents such as Triton X-100 and 3-[(3-cholamidopropyl)dimethylammonio]-1-propanesulfonate (CHAPS). Acyltransferase activity is inhibited by the presence of magnesium and calcium. Functionally, coenzyme A-dependent lysophosphatidic acid acyltransferase that catalyzes the transfer of an acyl group on a lysophosphatidic acid. Functions preferentially with 1-oleoyl-lysophosphatidic acid followed by 1-palmitoyl-lysophosphatidic acid, 1-stearoyl-lysophosphatidic acid and 1-arachidonoyl-lysophosphatidic acid as lipid acceptor. Functions preferentially with arachidonoyl-CoA followed by oleoyl-CoA as acyl group donors. Functions in phosphatidic acid biosynthesis. May regulate the cellular storage of triacylglycerol through activation of the phospholipase PNPLA2. Involved in keratinocyte differentiation. Regulates lipid droplet fusion. This chain is 1-acylglycerol-3-phosphate O-acyltransferase ABHD5, found in Mus musculus (Mouse).